We begin with the raw amino-acid sequence, 546 residues long: Probable protein kinase UbiB (546 aa).

Residues 124 to 502 enclose the Protein kinase domain; the sequence is DFEIKPLASA…HVRQGQSRYF (379 aa). ATP-binding positions include 130 to 138 and K153; that span reads LASASIAQV. D288 functions as the Proton acceptor in the catalytic mechanism. 2 helical membrane-spanning segments follow: residues 501-521 and 522-542; these read YFLG…VSRP and EWGL…FVGW.

It belongs to the ABC1 family. UbiB subfamily.

It is found in the cell inner membrane. It participates in cofactor biosynthesis; ubiquinone biosynthesis [regulation]. In terms of biological role, is probably a protein kinase regulator of UbiI activity which is involved in aerobic coenzyme Q (ubiquinone) biosynthesis. This is Probable protein kinase UbiB from Escherichia coli O127:H6 (strain E2348/69 / EPEC).